Consider the following 261-residue polypeptide: Indole-3-glycerol phosphate synthase (261 aa).

This sequence belongs to the TrpC family.

It carries out the reaction 1-(2-carboxyphenylamino)-1-deoxy-D-ribulose 5-phosphate + H(+) = (1S,2R)-1-C-(indol-3-yl)glycerol 3-phosphate + CO2 + H2O. The protein operates within amino-acid biosynthesis; L-tryptophan biosynthesis; L-tryptophan from chorismate: step 4/5. This chain is Indole-3-glycerol phosphate synthase, found in Burkholderia multivorans (strain ATCC 17616 / 249).